We begin with the raw amino-acid sequence, 77 residues long: Acyl carrier protein (77 aa).

Residues 2 to 77 (ADVLERVTKI…DAVNYIKSRL (76 aa)) form the Carrier domain. Ser37 is modified (O-(pantetheine 4'-phosphoryl)serine).

Belongs to the acyl carrier protein (ACP) family. 4'-phosphopantetheine is transferred from CoA to a specific serine of apo-ACP by AcpS. This modification is essential for activity because fatty acids are bound in thioester linkage to the sulfhydryl of the prosthetic group.

It is found in the cytoplasm. Its pathway is lipid metabolism; fatty acid biosynthesis. Its function is as follows. Carrier of the growing fatty acid chain in fatty acid biosynthesis. The sequence is that of Acyl carrier protein from Geobacillus kaustophilus (strain HTA426).